A 192-amino-acid chain; its full sequence is Adenylate kinase (192 aa).

An ATP-binding site is contributed by 10 to 18; it reads GVPGVGSTT.

This sequence belongs to the archaeal adenylate kinase family. In terms of assembly, monomer.

Its subcellular location is the cytoplasm. The enzyme catalyses AMP + ATP = 2 ADP. In Methanococcus vannielii (strain ATCC 35089 / DSM 1224 / JCM 13029 / OCM 148 / SB), this protein is Adenylate kinase.